The primary structure comprises 126 residues: Aspartate 1-decarboxylase (126 aa).

Ser-25 functions as the Schiff-base intermediate with substrate; via pyruvic acid in the catalytic mechanism. Ser-25 carries the post-translational modification Pyruvic acid (Ser). Thr-57 lines the substrate pocket. Tyr-58 acts as the Proton donor in catalysis. 73-75 (GAA) lines the substrate pocket.

Belongs to the PanD family. In terms of assembly, heterooctamer of four alpha and four beta subunits. Pyruvate serves as cofactor. In terms of processing, is synthesized initially as an inactive proenzyme, which is activated by self-cleavage at a specific serine bond to produce a beta-subunit with a hydroxyl group at its C-terminus and an alpha-subunit with a pyruvoyl group at its N-terminus.

It is found in the cytoplasm. The enzyme catalyses L-aspartate + H(+) = beta-alanine + CO2. It participates in cofactor biosynthesis; (R)-pantothenate biosynthesis; beta-alanine from L-aspartate: step 1/1. Functionally, catalyzes the pyruvoyl-dependent decarboxylation of aspartate to produce beta-alanine. In Psychrobacter sp. (strain PRwf-1), this protein is Aspartate 1-decarboxylase.